Here is a 486-residue protein sequence, read N- to C-terminus: Probable FAD-binding monooxygenase ltbD (486 aa).

Positions 186–243 (PAGDGGTNDQGPSRAQSTASSGGSGRPRSTESPQSGAQASTTPTSPPTTQSTGDDPAA) are disordered. Residues 194-206 (DQGPSRAQSTASS) show a composition bias toward polar residues. Residues 220-241 (SGAQASTTPTSPPTTQSTGDDP) show a composition bias toward low complexity.

Belongs to the FAD-binding monooxygenase family. Homodimer. It depends on FAD as a cofactor.

Its function is as follows. Probable FAD-binding monooxygenase; part of the gene cluster that mediates the biosynthesis of luteodienoside A, a glycosylated polyketide consisting of an unusual 1-O-beta-D-glucopyranosyl-myo-inositol (glucinol) ester of 3-hydroxy-2,2,4-trimethylocta-4,6-dienoic acid. The HR-PKS ltbA produces the trimethylated polyketide chain from acetyl-CoA, malonyl-CoA and S-adenosylmethionine (SAM), and the ltbA cAT domain then uses glucinol produced by the glycosyltransferase ltbB as an offloading substrate to release luteodienoside A. Since ltbA and ltbB are sufficient for the biosynthesis of luteodienoside A, the functions of the methyltransferase ltbC and the FAD-binding monooxygenase ltbD within the pathway remain obscur. The polypeptide is Probable FAD-binding monooxygenase ltbD (Aspergillus luteorubrus).